We begin with the raw amino-acid sequence, 123 residues long: MAETEKMKYGSLNRFAQAVTGLFLLFFLGVHLYVAHIDFGHPVAFFSSVINQLHNPWWLAFFLIFVYIITYHGINGLNHIVADTSISEKAKRNIGIALMVIYVITIIYGTILALLVARMTVPT.

At 1-13 (MAETEKMKYGSLN) the chain is on the cytoplasmic side. Residues 14–34 (RFAQAVTGLFLLFFLGVHLYV) form a helical membrane-spanning segment. Over 35 to 59 (AHIDFGHPVAFFSSVINQLHNPWWL) the chain is Extracellular. A helical membrane pass occupies residues 60–81 (AFFLIFVYIITYHGINGLNHIV). H72 is a heme binding site. Residues 82–91 (ADTSISEKAK) are Cytoplasmic-facing. The chain crosses the membrane as a helical span at residues 92–116 (RNIGIALMVIYVITIIYGTILALLV).

As to quaternary structure, part of an enzyme complex containing four subunits: a flavoprotein, an iron-sulfur protein, plus two membrane-anchoring proteins, SdhC and SdhD. The cofactor is heme.

Its subcellular location is the cell membrane. Its pathway is carbohydrate metabolism; tricarboxylic acid cycle. Membrane-anchoring subunit of succinate dehydrogenase (SDH). This is Succinate dehydrogenase hydrophobic membrane anchor subunit (sdhD) from Thermoplasma acidophilum (strain ATCC 25905 / DSM 1728 / JCM 9062 / NBRC 15155 / AMRC-C165).